The primary structure comprises 158 residues: Large ribosomal subunit protein uL23 (158 aa).

The segment at 1–43 is disordered; it reads MPPKSSTKAEPKASSAKTQVAKAKSAKKAVVKGTSSKTQRRIR. Low complexity predominate over residues 12-23; the sequence is KASSAKTQVAKA.

The protein belongs to the universal ribosomal protein uL23 family.

Functionally, this protein binds to a specific region on the 26S rRNA. The chain is Large ribosomal subunit protein uL23 from Puccinia graminis (Black stem rust fungus).